A 4493-amino-acid chain; its full sequence is Mucin-17 (4493 aa).

The N-terminal stretch at 1 to 25 (MPRPGTMALCLLTLVLSLLPPQAAA) is a signal peptide. The Extracellular portion of the chain corresponds to 26-4393 (EQDLSVNRAV…QGTQKSLVYG (4368 aa)). Residues 88-105 (NPEMTSIESSVTSDTPGV) show a composition bias toward polar residues. Disordered regions lie at residues 88-159 (NPEM…SISS), 188-223 (LTTSTQASSSPTTPESTTIPKSTNSEGSTPLTSMPA), 248-277 (TISAQASSSPTTAEGPSLSNSAPSGGSTPL), and 306-344 (VITSTEASSSPTTAEGTSIPTSTYTEGSTPLTSTPASTM). Over residues 106–146 (SSTRMTPTESRTTSESTSDSTTLFPSSTEDTSSPTTPEGTD) the composition is skewed to low complexity. Residues 148-159 (PMSTPSEESISS) are compositionally biased toward polar residues. 57 repeat units span residues 185–245 (STPL…EIST), 246–300 (PVTI…TTPA), 301–361 (ATNI…PVDT), 362–418 (STLV…TIPV), 420–477 (SKTF…TTPV), 479–538 (SKTQ…PVDT), 539–597 (STPV…PADS), 598–654 (NTFV…TTPV), 656–715 (SNTP…PVDT), 716–774 (STPV…PLDT), 775–831 (STHI…TTPV), 833–892 (SNSP…PVDT), 893–951 (STPV…PVDT), 952–1010 (STPV…PVDS), 1011–1069 (NTPL…PADT), 1070–1121 (STPV…ASTL), 1122–1187 (STTP…PVDS), 1188–1246 (KTQV…PVDT), 1247–1305 (STPV…PVDT), 1306–1364 (KGPV…PVDN), 1365–1423 (STPV…PVDT), 1424–1482 (STPG…PVDS), 1483–1541 (NSPV…PAVT), 1542–1600 (STPV…PIDS), 1601–1656 (KTQV…TTPV), 1658–1717 (SNSP…PVDN), 1718–1776 (STPV…PIDT), 1777–1835 (STPV…PVDS), 1836–1895 (NSPV…AVTS), 1896–1951 (TPVT…TTLA), 1953–2012 (TRTP…PVDT), 2013–2071 (STPA…PVDS), 2072–2127 (KTQV…TTPV), 2129–2188 (SNSP…PVDT), 2189–2247 (STPV…PVDT), 2248–2306 (STPV…PVDS), 2307–2365 (NTPF…PADT), 2366–2424 (STPV…PVDT), 2425–2483 (STPV…PVDT), 2484–2540 (STPM…TTPV), 2542–2601 (SNSP…PVDT), 2602–2653 (SIPV…ASTL), 2654–2719 (STTP…PVDT), 2720–2770 (STPV…EAST), 2772–2837 (STTA…PVDT), 2838–2896 (STPV…PVDT), 2897–2955 (SIPV…PVDT), 2956–3014 (RTPV…PADT), 3015–3073 (STPV…PVDS), 3074–3132 (NSPV…PVDT), 3133–3191 (STPV…PVDT), 3192–3247 (STPV…TTPV), 3249–3308 (SNTP…PADT), 3309–3367 (STPV…PVDT), 3368–3426 (STPV…PVDS), 3427–3485 (NTLV…PVDT), and 3486–3544 (STPV…PVDS). A 59 X approximate tandem repeats region spans residues 185–3727 (STPLTTSTQA…SVVTSTPVTT (3543 aa)). Residues 188–210 (LTTSTQASSSPTTPESTTIPKST) are compositionally biased toward low complexity. Polar residues predominate over residues 211 to 223 (NSEGSTPLTSMPA). Over residues 308–323 (TSTEASSSPTTAEGTS) the composition is skewed to low complexity. Polar residues predominate over residues 324–344 (IPTSTYTEGSTPLTSTPASTM). The span at 425 to 441 (TTASEASSSPTTAEDTS) shows a compositional bias: low complexity. 6 disordered regions span residues 425–629 (TTAS…ERGT), 644–868 (SEAS…TPLT), 886–1104 (STTP…TPLT), 1116–1163 (SEAS…TPLA), 1175–1279 (SEAN…GSTL), and 1296–1338 (STLL…GRTP). Positions 442–483 (IATSTPSEGSTPLTSMPVSTTPVASSEASNLSTTPVDSKTQV) are enriched in polar residues. The N-linked (GlcNAc...) asparagine glycan is linked to Asn-471. Low complexity predominate over residues 484–497 (TTSTEASSSPPTAE). Residues 498 to 528 (VNSMPTSTPSEGSTPLTSMSVSTMPVASSEA) show a composition bias toward polar residues. Composition is skewed to low complexity over residues 529-573 (STLS…TPLT) and 584-618 (SSEASTTSTTPADSNTFVTTSSEASSSSTTAEGTS). Composition is skewed to polar residues over residues 619–629 (MPTSTYSERGT) and 644–660 (SEASTLSTTPVDSNTPV). Residues 661–677 (TTSTEATSSSTTAEGTS) are compositionally biased toward low complexity. The span at 678 to 705 (MPTSTYTEGSTPLTSMPVNTTLVASSEA) shows a compositional bias: polar residues. Residue Asn-696 is glycosylated (N-linked (GlcNAc...) asparagine). Over residues 706 to 733 (STLSTTPVDTSTPVTTSTEASSSPTTAD) the composition is skewed to low complexity. The span at 737 to 754 (MPTSTPSEGSTPLTSMPV) shows a compositional bias: polar residues. The span at 755–776 (SKTLLTSSEASTLSTTPLDTST) shows a compositional bias: low complexity. Positions 777–832 (HITTSTEASCSPTTTEGTSMPISTPSEGSPLLTSIPVSITPVTSPEASTLSTTPVD) are enriched in polar residues. The segment covering 833-849 (SNSPVTTSTEVSSSPTP) has biased composition (low complexity). A compositionally biased stretch (polar residues) spans 854 to 868 (SMPTSTYSEGRTPLT). Over residues 886–900 (STTPVDTSTPVTNST) the composition is skewed to low complexity. Asn-898 is a glycosylation site (N-linked (GlcNAc...) asparagine). The span at 901 to 944 (EARSSPTTSEGTSMPTSTPGEGSTPLTSMPDSTTPVVSSEARTL) shows a compositional bias: polar residues. Positions 945–972 (SATPVDTSTPVTTSTEATSSPTTAEGTS) are enriched in low complexity. Residues 973-1011 (IPTSTPSEGTTPLTSTPVSHTLVANSEASTLSTTPVDSN) are compositionally biased toward polar residues. The span at 1012–1021 (TPLTTSTEAS) shows a compositional bias: low complexity. A compositionally biased stretch (polar residues) spans 1029–1062 (GTSMPTSTPSEGSTPLTRMPVSTTMVASSETSTL). Residues 1063–1090 (STTPADTSTPVTTYSQASSSSTTADGTS) show a composition bias toward low complexity. Composition is skewed to polar residues over residues 1091–1104 (MPTSTYSEGSTPLT) and 1116–1132 (SEASTLSTTPVDTSIPV). Residues 1133–1149 (TTSTEASSSPTTAEGTS) show a composition bias toward low complexity. Composition is skewed to polar residues over residues 1175–1198 (SEANTLSTTPVDSKTQVATSTEAS) and 1205–1222 (EVTSMPTSTPGERSTPLT). Low complexity predominate over residues 1237–1279 (STLSTSPVDTSTPVTTSAETSSSPTTAEGTSLPTSTTSEGSTL). Composition is skewed to polar residues over residues 1310-1320 (VTSNEVSSSPT) and 1326-1338 (SMPTSTYSEGRTP). Residue Asn-1345 is glycosylated (N-linked (GlcNAc...) asparagine). Residues 1360–1394 (TPVDNSTPVTTSTEACSSPTTSEGTSMPNSNPSEG) are compositionally biased toward polar residues. Disordered regions lie at residues 1360-1516 (TPVD…STAL), 1537-1575 (TPAVTSTPVTTYSQASSSPTTADGTSMQTSTYSEGSTPL), 1590-1930 (ANTL…PLTS), 1947-2163 (STTL…RTPL), 2177-2281 (AIST…TTPL), 2295-2501 (EVST…TTAE), 2524-2630 (TTPV…TPSE), 2647-2693 (SSEA…RSTP), 2709-2751 (ASTL…DGST), 2765-2853 (SSEA…SPTT), 2879-2925 (TPVA…TPSE), 2942-3167 (GSEA…TPLT), 3182-3577 (STLS…GSSS), 3589-3635 (TSSE…EVST), 3667-3701 (ITSTQVSSSPVTPEGTTMPIWTPSEGSTPLTTMPV), 3785-3812 (MTTASEGSSSPTTLEGTTTMPMSTTSER), 3829-3849 (PSEASTLSTPPGDTSTPLLTS), 3892-3914 (ASIASTPPLDTSTTFTPSTDTAS), 3965-3988 (VITSTELNTPSTSSSSTTTSFSTT), and 4008-4129 (STAP…TPTV). 2 stretches are compositionally biased toward low complexity: residues 1395–1415 (TTPLTSIPVSTTPVVSSEAST) and 1423–1442 (TSTPGTTSAEATSSPTTAEG). Polar residues predominate over residues 1461–1483 (PVSNTPVANSEASTLSTTPVDSN). The segment covering 1484-1499 (SPVVTSTAVSSSPTPA) has biased composition (low complexity). Over residues 1504-1516 (IAISTPSEGSTAL) the composition is skewed to polar residues. A compositionally biased stretch (low complexity) spans 1537–1547 (TPAVTSTPVTT). Composition is skewed to polar residues over residues 1548-1575 (YSQASSSPTTADGTSMQTSTYSEGSTPL) and 1590-1604 (ANTLSTTPIDSKTQV). Residues 1605-1620 (TASTEASSSTTAEGSS) are compositionally biased toward low complexity. Composition is skewed to polar residues over residues 1621 to 1673 (MTIS…SSPT) and 1679 to 1775 (SMPT…TPID). Residues 1776–1797 (TSTPVTTSTEATSSPTTAEGTS) show a composition bias toward low complexity. The segment covering 1798–1836 (IPTSTLSEGMTPLTSTPVSHTLVANSEASTLSTTPVDSN) has biased composition (polar residues). A compositionally biased stretch (low complexity) spans 1837 to 1852 (SPVVTSTAVSSSPTPA). The segment covering 1856–1883 (SIATSTPSEGSTALTSIPVSTTTVASSE) has biased composition (polar residues). A compositionally biased stretch (low complexity) spans 1884–1900 (TNTLSTTPAVTSTPVTT). 2 stretches are compositionally biased toward polar residues: residues 1901 to 1921 (YAQVSSSPTTADGSSMPTSTP) and 1947 to 1976 (STTLADTRTPVTTYSQASSSPTTADGTSMP). Residues 1984 to 2033 (STPLTSMPLSTTLVVSSEASTLSTTPVDTSTPATTSTEGSSSPTTAGGTS) are compositionally biased toward low complexity. 2 stretches are compositionally biased toward polar residues: residues 2034-2043 (IQTSTPSERT) and 2051-2077 (VSTTLVVSSEGNTLSTTPVDSKTQVTN). Asn-2077 carries an N-linked (GlcNAc...) asparagine glycan. Residues 2078 to 2091 (STEASSSATAEGSS) show a composition bias toward low complexity. The segment covering 2092 to 2156 (MTISAPSEGS…EGTSMQTSTY (65 aa)) has biased composition (polar residues). Residues 2177 to 2196 (AISTLSTTPVDTSTPVTNST) are compositionally biased toward low complexity. A glycan (N-linked (GlcNAc...) asparagine) is linked at Asn-2194. A compositionally biased stretch (polar residues) spans 2197-2240 (EARSSPTTSEGTSMPTSTPSEGSTPFTSMPVSTMPVVTSEASTL). Positions 2241-2268 (SATPVDTSTPVTTSTEATSSPTTAEGTS) are enriched in low complexity. 2 stretches are compositionally biased toward polar residues: residues 2269-2281 (IPTSTLSEGTTPL) and 2295-2307 (EVSTLSTTPVDSN). Positions 2308-2317 (TPFTTSTEAS) are enriched in low complexity. Residues 2325–2358 (GTSMPTSTSSEGNTPLTRMPVSTTMVASFETSTL) show a composition bias toward polar residues. Positions 2359–2371 (STTPADTSTPVTT) are enriched in low complexity. Positions 2372–2395 (YSQAGSSPTTADDTSMPTSTYSEG) are enriched in polar residues. 2 stretches are compositionally biased toward low complexity: residues 2396–2445 (STPL…EGTS) and 2462–2499 (PVSTTPVVSSEAGTLSTTPVDTSTPMTTSTEASSSPTT). Polar residues predominate over residues 2524-2547 (TTPVASPEASTLSTTPVDSNSPVV). The span at 2548 to 2563 (TSTEISSSATSAEGTS) shows a compositional bias: low complexity. A compositionally biased stretch (polar residues) spans 2564–2576 (MPTSTYSEGSTPL). Residues 2586 to 2617 (LASSEASTLSTTPVDTSIPVTTSTETSSSPTT) are compositionally biased toward low complexity. The segment covering 2618-2628 (AKDTSMPISTP) has biased composition (polar residues). Positions 2654 to 2681 (STTPVDTRTLVTTSTGTSSSPTTAEGSS) are enriched in low complexity. A compositionally biased stretch (polar residues) spans 2682-2693 (MPTSTPGERSTP). Residues 2710 to 2740 (STLSTTPVDTSTPVTTSAEASSSPTTAEGTS) show a composition bias toward low complexity. The span at 2741–2751 (MRISTPSDGST) shows a compositional bias: polar residues. 2 stretches are compositionally biased toward low complexity: residues 2765-2816 (SSEA…TSMP) and 2829-2853 (TLSTTPVDTSTPVTTSTKASSSPTT). Residues 2879 to 2900 (TPVASSEASTLSTTPVDTSIPV) show a composition bias toward polar residues. Low complexity-rich tracts occupy residues 2901 to 2917 (TTSTEGSSSPTTAEGTS) and 2950 to 2976 (TTPVDTRTPVTTSAEASSSPTTAEGTS). The span at 2988–3009 (PLTSMSVSTMPVASSEASTLSR) shows a compositional bias: polar residues. Over residues 3010–3031 (TPADTSTPVTTSTEASSSPTTA) the composition is skewed to low complexity. Over residues 3037–3057 (PISTPSEGSTPLTSIPVSTTP) the composition is skewed to polar residues. Low complexity-rich tracts occupy residues 3073-3089 (SNSPVVTSTEVSSSPTP) and 3104-3140 (STPLTGVPVSTTPVTSSAISTLSTTPVDTSTPVTTST). Residues 3141-3166 (EAHSSPTTSEGTSMPTSTPSEGSTPL) show a composition bias toward polar residues. Residues 3185-3211 (SATPVDTSTPVTTSTEATSSTTAEGTS) show a composition bias toward low complexity. The segment covering 3212–3253 (IPTSTPSEGMTPLTSVPVSNTPVASSEASILSTTPVDSNTPL) has biased composition (polar residues). Low complexity predominate over residues 3254–3267 (TTSTEASSSPPTAE). The span at 3268-3288 (GTSMPTSTPSEGSTPLTSMPV) shows a compositional bias: polar residues. The segment covering 3289–3314 (STTTVASSETSTLSTTPADTSTPVTT) has biased composition (low complexity). The span at 3329–3357 (SMPTSTYSEGSTPLTNMSFSTTPVVSSEA) shows a compositional bias: polar residues. Asn-3344 is a glycosylation site (N-linked (GlcNAc...) asparagine). A compositionally biased stretch (low complexity) spans 3358-3375 (STLSTTPVDTSTPVTTST). Residues 3376-3401 (EASLSPTTAEGTSIPTSSPSEGTTPL) show a composition bias toward polar residues. Low complexity predominate over residues 3405-3414 (PVSTTPVVSS). 2 stretches are compositionally biased toward polar residues: residues 3415–3441 (EVNTLSTTPVDSNTLVTTSTEASSSPT) and 3447–3475 (SLPTSTTSEGSTPLSIMPLSTTPVASSEA). The segment covering 3476–3501 (STLSTTPVDTSTPVTTSSPTNSSPTT) has biased composition (low complexity). Polar residues-rich tracts occupy residues 3502–3549 (AEVT…TFVT) and 3558–3571 (PATLQVTTMRMSTP). Over residues 3589 to 3616 (TSSEASTPSTPSVDRSTPVTTSTQSNST) the composition is skewed to low complexity. 2 consecutive repeat copies span residues 3604-3662 (STPV…PVDT) and 3663-3727 (STPV…PVTT). A compositionally biased stretch (polar residues) spans 3626–3635 (PMSTPSEVST). Positions 3667 to 3679 (ITSTQVSSSPVTP) are enriched in low complexity. Polar residues-rich tracts occupy residues 3690 to 3701 (SEGSTPLTTMPV) and 3785 to 3806 (MTTASEGSSSPTTLEGTTTMPM). Composition is skewed to low complexity over residues 3967-3988 (TSTELNTPSTSSSSTTTSFSTT), 4008-4083 (STAP…SSTT), and 4090-4129 (TTMTTRTKPSTRTTSFPTVTTTAVPTNTTIKSNPTSTPTV). N-linked (GlcNAc...) asparagine glycosylation occurs at Asn-4116. One can recognise an EGF-like domain in the interval 4131–4170 (RTTTCFGDGCQNTASRCKNGGTWDGLKCQCPNLYYGELCE). Disulfide bonds link Cys-4135/Cys-4147, Cys-4140/Cys-4158, and Cys-4160/Cys-4169. The SEA domain maps to 4184–4291 (ISAQMELTVT…QQIMINDICS (108 aa)). Residues Asn-4205, Asn-4236, Asn-4267, Asn-4297, and Asn-4305 are each glycosylated (N-linked (GlcNAc...) asparagine). The chain crosses the membrane as a helical span at residues 4394–4414 (LVGAGVVLMLIILVALLMLVF). Topologically, residues 4415 to 4493 (RSKREVKRQK…QRPQVMTTSF (79 aa)) are cytoplasmic.

Interacts via its C-terminus with PDZK1 and this interaction appears important for proper localization. In terms of processing, probably cleaved within the SEA domain. N-glycosylated. Contains high mannose and complex-type glycans. The forms containing the complex type glycans localize to the cell surface. Not O-glycosylated. In terms of tissue distribution, expressed almost exclusively in the intestine. Expression is especially high in both the duodenum and transverse colon. Expressed in mature absorptive cells of the small intestinal villi. No expression is detected in goblet cells. Highly expressed in pancreatic adenocarcinoma tissue (at protein level). Expression is not detectable in normal pancreas, in pancreatitis or in cell lines derived from other cancers.

The protein resides in the cell membrane. It is found in the secreted. Its function is as follows. Probably plays a role in maintaining homeostasis on mucosal surfaces. The protein is Mucin-17 (MUC17) of Homo sapiens (Human).